A 274-amino-acid chain; its full sequence is 3-methyl-2-oxobutanoate hydroxymethyltransferase (274 aa).

Residues D49 and D88 each coordinate Mg(2+). 3-methyl-2-oxobutanoate is bound by residues 49–50 (DS), D88, and K118. E120 provides a ligand contact to Mg(2+). The Proton acceptor role is filled by E187.

Belongs to the PanB family. In terms of assembly, homodecamer; pentamer of dimers. Mg(2+) serves as cofactor.

It is found in the cytoplasm. It catalyses the reaction 3-methyl-2-oxobutanoate + (6R)-5,10-methylene-5,6,7,8-tetrahydrofolate + H2O = 2-dehydropantoate + (6S)-5,6,7,8-tetrahydrofolate. Its pathway is cofactor biosynthesis; (R)-pantothenate biosynthesis; (R)-pantoate from 3-methyl-2-oxobutanoate: step 1/2. Functionally, catalyzes the reversible reaction in which hydroxymethyl group from 5,10-methylenetetrahydrofolate is transferred onto alpha-ketoisovalerate to form ketopantoate. This Rhodopseudomonas palustris (strain BisB18) protein is 3-methyl-2-oxobutanoate hydroxymethyltransferase.